The primary structure comprises 309 residues: Wnt inhibitor of Dorsal protein (309 aa).

A signal peptide spans 1-16; sequence MIFAITFFMGITSTLA. 10 disulfides stabilise this stretch: cysteine 51/cysteine 62, cysteine 102/cysteine 110, cysteine 112/cysteine 121, cysteine 162/cysteine 179, cysteine 164/cysteine 174, cysteine 232/cysteine 269, cysteine 248/cysteine 262, cysteine 266/cysteine 308, cysteine 284/cysteine 299, and cysteine 286/cysteine 296.

It belongs to the Wnt family.

It is found in the secreted. The protein resides in the extracellular space. The protein localises to the extracellular matrix. In terms of biological role, binds as a ligand to a family of frizzled seven-transmembrane receptors and acts through a cascade of genes on the nucleus. The chain is Wnt inhibitor of Dorsal protein (wntD) from Drosophila melanogaster (Fruit fly).